The sequence spans 324 residues: Glyoxylate/hydroxypyruvate reductase B (324 aa).

Catalysis depends on residues Arg-237 and Glu-266. The active-site Proton donor is the His-285.

This sequence belongs to the D-isomer specific 2-hydroxyacid dehydrogenase family. GhrB subfamily. In terms of assembly, homodimer.

It localises to the cytoplasm. It catalyses the reaction glycolate + NADP(+) = glyoxylate + NADPH + H(+). It carries out the reaction (R)-glycerate + NAD(+) = 3-hydroxypyruvate + NADH + H(+). The catalysed reaction is (R)-glycerate + NADP(+) = 3-hydroxypyruvate + NADPH + H(+). In terms of biological role, catalyzes the NADPH-dependent reduction of glyoxylate and hydroxypyruvate into glycolate and glycerate, respectively. This Shigella boydii serotype 18 (strain CDC 3083-94 / BS512) protein is Glyoxylate/hydroxypyruvate reductase B.